The following is a 596-amino-acid chain: Germinal center kinase 3 (596 aa).

Over residues 1–54 (MSSSNLAGNTNTTTTSSAASAAAAHSAANASTITSEYSTTQTTTGTFNTDTLSS) the composition is skewed to low complexity. Positions 1-80 (MSSSNLAGNT…PPPPPQVSSP (80 aa)) are disordered. Phosphothreonine; by autocatalysis is present on residues threonine 13 and threonine 32. The span at 67–77 (SQPPPPPPPQV) shows a compositional bias: pro residues. The region spanning 108–386 (YKLDESIGVG…ASELLKYSFF (279 aa)) is the Protein kinase domain. Residues 114 to 122 (IGVGATATV) and lysine 137 each bind ATP. At serine 190 the chain carries Phosphoserine; by autocatalysis. The Proton acceptor role is filled by aspartate 240. Position 280 is a phosphothreonine (threonine 280). Phosphoserine; by autocatalysis is present on serine 405. Serine 419 is subject to Phosphoserine. The segment at 429 to 496 (NWEFEYDSPQ…EGGGATTPCP (68 aa)) is disordered. A compositionally biased stretch (acidic residues) spans 432 to 450 (FEYDSPQESDDDSDLEDEE). Gly residues predominate over residues 466–479 (GAAGAAGGATGGAA).

It belongs to the protein kinase superfamily. STE Ser/Thr protein kinase family. STE20 subfamily. In terms of assembly, interacts (via C-terminus) with clh-3; required for the phosphorylation-mediated inhibition of clh-3 function. Interacts (via C-terminus) with wnk-1; the interaction is direct. In terms of processing, phosphorylated at Thr-280 and Ser-419 probably by wnk-1; phosphorylation results in weak activation. Predominantly autophosphorylated at Thr-32 and Ser-190 and weakly autophosphorylated at Thr-13 and Ser-405 in vitro. Ubiquitously expressed with a higher expression in the excretory cell. Expressed in both male and female germ cells; up-regulated in maturing spermatocytes but absent in mature sperm.

It localises to the cytoplasm. The protein localises to the nucleus. It carries out the reaction L-seryl-[protein] + ATP = O-phospho-L-seryl-[protein] + ADP + H(+). It catalyses the reaction L-threonyl-[protein] + ATP = O-phospho-L-threonyl-[protein] + ADP + H(+). Its function is as follows. Plays a role in osmotic stress responses by regulating ion homeostasis and by controlling cell volume via the phosphorylation-mediated inhibition of the chloride channel clh-3. In addition, increases gpdh-1 translation upon osmotic stress, likely downstream of wnk-1. Involved in several developmental processes including the tubular formation of the excretory canals, the formation of the intestine and the progression through larval stages. In addition, required for germ line development by controlling meiosis and chromosomal segregation during spermatogenesis. By controlling clh-3 activity, may regulate the development of the excretory canals and fertility. In Caenorhabditis elegans, this protein is Germinal center kinase 3.